The chain runs to 134 residues: Calvin cycle protein CP12-3, chloroplastic (134 aa).

A disordered region spans residues M1 to R21. Residues M1–S42 constitute a chloroplast transit peptide. 2 cysteine pairs are disulfide-bonded: C78-C87 and C120-C129.

Belongs to the CP12 family. Monomer. Component of a complex that contains two dimers of PRK, two tetramers of GAPDH and CP12. CP12 associates with GAPDH, causing its conformation to change. This GAPDH/CP12 complex binds PRK to form a half-complex (one unit). This unit probably dimerizes due partially to interactions between the enzymes of each unit. In terms of processing, contains two disulfide bonds; only the oxidized protein, with two disulfide bonds, is active in complex formation. The C-terminal disulfide is involved in the interaction with GAPDH and the N-terminal disulfide mediates the binding of PRK with this binary complex. As to expression, mostly expressed, at low levels, in stems and, to a lesser extent, in leaves and roots.

The protein localises to the plastid. The protein resides in the chloroplast. Its function is as follows. Acts as a linker essential in the assembly of a core complex of PRK/GAPDH. Coordinates the reversible inactivation of chloroplast enzymes GAPDH and PRK during darkness in photosynthetic tissues. The polypeptide is Calvin cycle protein CP12-3, chloroplastic (CP12-3) (Arabidopsis thaliana (Mouse-ear cress)).